The sequence spans 350 residues: MDINLFDFHLPEELIAQVPLEERETSRLMVLDRETGDIEHKHFTDILSYLHEGDCLVLNETKVMPARLHGVKEDPGAHIEVLLLKQEEGDKWETLVKPAKRVKEGTVISFGEGKLKATCTGTADQGGRQLEFSYDGIFYEILDELGEMPLPPYIKETLEDRDRYQTVYAKEIGSAAAPTAGLHFTEELLEKLKQKGVELAFITLHVGLGTFRPVSADTIEEHHMHAEYYHMSEETAALLNRVKENGGRIITVGTTSTRTLETIATDHDGKLCAASGWTDIFMYPGYEFKAIDGLITNFHLPKSTLIMLVSAFANRDNVLHAYNEAVKEKYRFFSFGDAMFVASHAKMGNK.

Belongs to the QueA family. As to quaternary structure, monomer.

Its subcellular location is the cytoplasm. The catalysed reaction is 7-aminomethyl-7-carbaguanosine(34) in tRNA + S-adenosyl-L-methionine = epoxyqueuosine(34) in tRNA + adenine + L-methionine + 2 H(+). The protein operates within tRNA modification; tRNA-queuosine biosynthesis. In terms of biological role, transfers and isomerizes the ribose moiety from AdoMet to the 7-aminomethyl group of 7-deazaguanine (preQ1-tRNA) to give epoxyqueuosine (oQ-tRNA). This is S-adenosylmethionine:tRNA ribosyltransferase-isomerase from Bacillus cereus (strain Q1).